Reading from the N-terminus, the 56-residue chain is Large ribosomal subunit protein bL33 (56 aa).

This sequence belongs to the bacterial ribosomal protein bL33 family.

In Ehrlichia canis (strain Jake), this protein is Large ribosomal subunit protein bL33.